The following is a 135-amino-acid chain: ATP synthase epsilon chain (135 aa).

This sequence belongs to the ATPase epsilon chain family. F-type ATPases have 2 components, CF(1) - the catalytic core - and CF(0) - the membrane proton channel. CF(1) has five subunits: alpha(3), beta(3), gamma(1), delta(1), epsilon(1). CF(0) has three main subunits: a, b and c.

The protein resides in the cell inner membrane. Its function is as follows. Produces ATP from ADP in the presence of a proton gradient across the membrane. This Rhizobium rhizogenes (strain K84 / ATCC BAA-868) (Agrobacterium radiobacter) protein is ATP synthase epsilon chain.